The primary structure comprises 209 residues: Uracil phosphoribosyltransferase (209 aa).

Residues Arg-79, Arg-104, and 131-139 each bind 5-phospho-alpha-D-ribose 1-diphosphate; that span reads DPMLATGGS. Residues Ile-194 and 199 to 201 contribute to the uracil site; that span reads GDA. Asp-200 contacts 5-phospho-alpha-D-ribose 1-diphosphate.

It belongs to the UPRTase family. The cofactor is Mg(2+).

The catalysed reaction is UMP + diphosphate = 5-phospho-alpha-D-ribose 1-diphosphate + uracil. It participates in pyrimidine metabolism; UMP biosynthesis via salvage pathway; UMP from uracil: step 1/1. Allosterically activated by GTP. In terms of biological role, catalyzes the conversion of uracil and 5-phospho-alpha-D-ribose 1-diphosphate (PRPP) to UMP and diphosphate. The protein is Uracil phosphoribosyltransferase of Alkaliphilus metalliredigens (strain QYMF).